A 1402-amino-acid chain; its full sequence is Transcription factor SPT20 homolog (1402 aa).

Disordered regions lie at residues 1–29 (MNGNSKVHTEENKNEHQQEGKGGEQEQEQ), 60–107 (VNSL…LDTD), 114–133 (NNDSSNNTTTTTIPRQSSSS), 177–206 (QTTLPTNNNNNNNNNNNNNNNNNNNNNNIL), 786–817 (APSTSTSSSSSSGGTTTTTTATGTTPTTPTPV), 1136–1174 (PQQIQTQPLQQPPNQMAQSMISPQSTPSTSPSPQQQYQT), and 1199–1250 (QPLQ…PPQI). Residues 7–29 (VHTEENKNEHQQEGKGGEQEQEQ) show a composition bias toward basic and acidic residues. Residues 60–72 (VNSLSEPTPNEQQ) are compositionally biased toward polar residues. The segment covering 73–102 (NNNNNNNSNGNGNGNDETTSSKTTTIINSN) has biased composition (low complexity). Low complexity-rich tracts occupy residues 183 to 204 (NNNNNNNNNNNNNNNNNNNNNN), 786 to 812 (APSTSTSSSSSSGGTTTTTTATGTTPT), 1136 to 1150 (PQQIQTQPLQQPPNQ), 1157 to 1174 (SPQSTPSTSPSPQQQYQT), 1199 to 1218 (QPLQQPQPQPQQQQQQQQQQ), and 1226 to 1250 (PQQFAQHLQQQQMQRPQAQLQPPQI).

It belongs to the SPT20 family.

This chain is Transcription factor SPT20 homolog, found in Dictyostelium discoideum (Social amoeba).